The chain runs to 350 residues: Beta-hexosaminidase (350 aa).

Substrate contacts are provided by residues aspartate 62, arginine 70, arginine 133, and lysine 163–histidine 164. Histidine 176 serves as the catalytic Proton donor/acceptor. Catalysis depends on aspartate 248, which acts as the Nucleophile.

It belongs to the glycosyl hydrolase 3 family. NagZ subfamily.

The protein resides in the cytoplasm. The catalysed reaction is Hydrolysis of terminal non-reducing N-acetyl-D-hexosamine residues in N-acetyl-beta-D-hexosaminides.. The protein operates within cell wall biogenesis; peptidoglycan recycling. Plays a role in peptidoglycan recycling by cleaving the terminal beta-1,4-linked N-acetylglucosamine (GlcNAc) from peptide-linked peptidoglycan fragments, giving rise to free GlcNAc, anhydro-N-acetylmuramic acid and anhydro-N-acetylmuramic acid-linked peptides. In Haemophilus influenzae (strain PittEE), this protein is Beta-hexosaminidase.